A 367-amino-acid chain; its full sequence is tRNA-specific 2-thiouridylase MnmA (367 aa).

ATP contacts are provided by residues Gly9–Ser16 and Met35. Residues Asn95–Asp97 form an interaction with target base in tRNA region. Residue Cys100 is the Nucleophile of the active site. The cysteines at positions 100 and 196 are disulfide-linked. Gly124 serves as a coordination point for ATP. The tract at residues Lys146–Gln148 is interaction with tRNA. The active-site Cysteine persulfide intermediate is the Cys196. The segment at Arg308–Tyr309 is interaction with tRNA.

It belongs to the MnmA/TRMU family.

The protein resides in the cytoplasm. It carries out the reaction S-sulfanyl-L-cysteinyl-[protein] + uridine(34) in tRNA + AH2 + ATP = 2-thiouridine(34) in tRNA + L-cysteinyl-[protein] + A + AMP + diphosphate + H(+). Catalyzes the 2-thiolation of uridine at the wobble position (U34) of tRNA, leading to the formation of s(2)U34. The sequence is that of tRNA-specific 2-thiouridylase MnmA from Nitrosococcus oceani (strain ATCC 19707 / BCRC 17464 / JCM 30415 / NCIMB 11848 / C-107).